Reading from the N-terminus, the 507-residue chain is Beta-glucosidase 3 (507 aa).

The first 23 residues, 1–23 (MELTLSLLTIFLLFFALSGRCSD), serve as a signal peptide directing secretion. An a beta-D-glucoside-binding site is contributed by Q41. An N-linked (GlcNAc...) asparagine glycan is attached at N64. Residues H138 and 183–184 (NE) contribute to the a beta-D-glucoside site. The Proton donor role is filled by E184. A disulfide bridge links C203 with C210. N-linked (GlcNAc...) asparagine glycosylation is found at N209 and N214. Y326 is an a beta-D-glucoside binding site. The N-linked (GlcNAc...) asparagine glycan is linked to N361. A beta-D-glucoside is bound at residue E394. E394 serves as the catalytic Nucleophile. N429 is a glycosylation site (N-linked (GlcNAc...) asparagine). Residues W439 and F455 each contribute to the a beta-D-glucoside site. N-linked (GlcNAc...) asparagine glycans are attached at residues N461, N485, and N500.

This sequence belongs to the glycosyl hydrolase 1 family.

It carries out the reaction Hydrolysis of terminal, non-reducing beta-D-glucosyl residues with release of beta-D-glucose.. This chain is Beta-glucosidase 3, found in Arabidopsis thaliana (Mouse-ear cress).